The following is a 441-amino-acid chain: G-protein coupled receptor family C group 5 member C (441 aa).

The first 22 residues, 1 to 22, serve as a signal peptide directing secretion; it reads MATHKTLLMCLGLPLFFPGALA. Residues 23 to 49 lie on the Extracellular side of the membrane; it reads QNHAPPGCSPDLDPLYYNLCDRSGAWG. Residues 50 to 70 traverse the membrane as a helical segment; sequence IVLEAVAGAGIITTFVLTIIL. Residues 71 to 84 are Cytoplasmic-facing; sequence VASLPFVQDTKKRS. The helical transmembrane segment at 85 to 105 threads the bilayer; it reads LLGTQVFFLLGTLGLFCLVFA. Residues 106-119 are Extracellular-facing; sequence CVVKPDFSTCASRR. The helical transmembrane segment at 120-140 threads the bilayer; the sequence is FLFGVLFAICFSCLIAHTLSL. The Cytoplasmic portion of the chain corresponds to 141-154; it reads NFLARKNHGPRGWV. The chain crosses the membrane as a helical span at residues 155 to 175; that stretch reads IFTVALLLTLVEVIINTEWLI. At 176-207 the chain is on the extracellular side; sequence ITLVRGGGQVSTPGNGSADWTVTSPCAIANMD. A glycan (N-linked (GlcNAc...) asparagine) is linked at asparagine 190. A helical transmembrane segment spans residues 208 to 228; that stretch reads FVMALIYVMLLLLAAFLGAWP. Topologically, residues 229 to 240 are cytoplasmic; sequence TLCGRFKRWRKH. Residues 241 to 261 traverse the membrane as a helical segment; the sequence is GVFVLLTTATSIAIWVVWIVM. The Extracellular segment spans residues 262–278; sequence YTYGNKQHHSPTWDDPT. A helical membrane pass occupies residues 279 to 299; that stretch reads LAIALAANAWTFVFFYVIPEV. The Cytoplasmic portion of the chain corresponds to 300 to 441; the sequence is SQVTKPSPEQ…DQSPKNKTRW (142 aa). Residues serine 343, serine 382, serine 402, and serine 405 each carry the phosphoserine modification. The residue at position 413 (tyrosine 413) is a Phosphotyrosine. Residues 419–441 form a disordered region; it reads QVATPTKDGKISQDQSPKNKTRW. The residue at position 422 (threonine 422) is a Phosphothreonine. A compositionally biased stretch (polar residues) spans 430–441; that stretch reads SQDQSPKNKTRW. Position 434 is a phosphoserine (serine 434).

The protein belongs to the G-protein coupled receptor 3 family.

It is found in the cell membrane. In terms of biological role, this retinoic acid-inducible G-protein coupled receptor provide evidence for a possible interaction between retinoid and G-protein signaling pathways. The polypeptide is G-protein coupled receptor family C group 5 member C (Gprc5c) (Rattus norvegicus (Rat)).